The primary structure comprises 1005 residues: Translation initiation factor IF-2 (1005 aa).

Disordered stretches follow at residues 54–337 and 368–414; these read KYVP…RRPQ and PKPK…PTSV. Residues 58-73 show a composition bias toward polar residues; the sequence is SPSTHSMPPTRPTSHS. The span at 75-86 shows a compositional bias: pro residues; it reads PLPPQPGKPQPK. Over residues 146 to 157 the composition is skewed to polar residues; it reads GSNSPSHSESTP. Low complexity-rich tracts occupy residues 189-198 and 222-240; these read PSPAAMAGRA and VESA…PRAE. Residues 258-274 are compositionally biased toward basic and acidic residues; it reads PRSETSEDGARRGEKLV. The segment covering 392 to 401 has biased composition (basic residues); sequence GGRKLSRRDR. In terms of domain architecture, tr-type G spans 495 to 668; it reads RRPPVVTIMG…LLVSEVEDLY (174 aa). The tract at residues 504–511 is G1; it reads GHVDHGKT. 504 to 511 serves as a coordination point for GTP; sequence GHVDHGKT. The tract at residues 529–533 is G2; that stretch reads GITQH. The segment at 554-557 is G3; sequence DTPG. Residues 554 to 558 and 608 to 611 contribute to the GTP site; these read DTPGH and NKID. Residues 608 to 611 are G4; sequence NKID. A G5 region spans residues 644-646; it reads SAI.

Belongs to the TRAFAC class translation factor GTPase superfamily. Classic translation factor GTPase family. IF-2 subfamily.

The protein localises to the cytoplasm. In terms of biological role, one of the essential components for the initiation of protein synthesis. Protects formylmethionyl-tRNA from spontaneous hydrolysis and promotes its binding to the 30S ribosomal subunits. Also involved in the hydrolysis of GTP during the formation of the 70S ribosomal complex. The chain is Translation initiation factor IF-2 from Cyanothece sp. (strain PCC 7425 / ATCC 29141).